The following is an 87-amino-acid chain: RNA-binding protein Hfq (87 aa).

One can recognise a Sm domain in the interval aspartate 9–asparagine 68. The disordered stretch occupies residues histidine 66–proline 87.

It belongs to the Hfq family. As to quaternary structure, homohexamer.

Functionally, RNA chaperone that binds small regulatory RNA (sRNAs) and mRNAs to facilitate mRNA translational regulation in response to envelope stress, environmental stress and changes in metabolite concentrations. Also binds with high specificity to tRNAs. The chain is RNA-binding protein Hfq from Wigglesworthia glossinidia brevipalpis.